The sequence spans 138 residues: Superoxide dismutase [Mn] (138 aa).

4 residues coordinate Mn(2+): H2, H49, D133, and H137.

Belongs to the iron/manganese superoxide dismutase family. It depends on Mn(2+) as a cofactor.

The catalysed reaction is 2 superoxide + 2 H(+) = H2O2 + O2. Its function is as follows. Destroys superoxide anion radicals which are normally produced within the cells and which are toxic to biological systems. The sequence is that of Superoxide dismutase [Mn] (sodA) from Mycobacterium szulgai.